The chain runs to 344 residues: Holliday junction branch migration complex subunit RuvB (344 aa).

Residues Met-1–Tyr-182 form a large ATPase domain (RuvB-L) region. ATP is bound by residues Ile-21, Arg-22, Gly-63, Lys-66, Thr-67, Thr-68, Glu-129 to Tyr-131, Arg-172, Tyr-182, and Arg-219. Residue Thr-67 coordinates Mg(2+). Residues Asn-183 to Glu-253 are small ATPAse domain (RuvB-S). The tract at residues Glu-256–Gly-344 is head domain (RuvB-H). Residues Arg-311 and Arg-316 each coordinate DNA.

This sequence belongs to the RuvB family. Homohexamer. Forms an RuvA(8)-RuvB(12)-Holliday junction (HJ) complex. HJ DNA is sandwiched between 2 RuvA tetramers; dsDNA enters through RuvA and exits via RuvB. An RuvB hexamer assembles on each DNA strand where it exits the tetramer. Each RuvB hexamer is contacted by two RuvA subunits (via domain III) on 2 adjacent RuvB subunits; this complex drives branch migration. In the full resolvosome a probable DNA-RuvA(4)-RuvB(12)-RuvC(2) complex forms which resolves the HJ.

It is found in the cytoplasm. It carries out the reaction ATP + H2O = ADP + phosphate + H(+). Functionally, the RuvA-RuvB-RuvC complex processes Holliday junction (HJ) DNA during genetic recombination and DNA repair, while the RuvA-RuvB complex plays an important role in the rescue of blocked DNA replication forks via replication fork reversal (RFR). RuvA specifically binds to HJ cruciform DNA, conferring on it an open structure. The RuvB hexamer acts as an ATP-dependent pump, pulling dsDNA into and through the RuvAB complex. RuvB forms 2 homohexamers on either side of HJ DNA bound by 1 or 2 RuvA tetramers; 4 subunits per hexamer contact DNA at a time. Coordinated motions by a converter formed by DNA-disengaged RuvB subunits stimulates ATP hydrolysis and nucleotide exchange. Immobilization of the converter enables RuvB to convert the ATP-contained energy into a lever motion, pulling 2 nucleotides of DNA out of the RuvA tetramer per ATP hydrolyzed, thus driving DNA branch migration. The RuvB motors rotate together with the DNA substrate, which together with the progressing nucleotide cycle form the mechanistic basis for DNA recombination by continuous HJ branch migration. Branch migration allows RuvC to scan DNA until it finds its consensus sequence, where it cleaves and resolves cruciform DNA. The sequence is that of Holliday junction branch migration complex subunit RuvB from Chlorobaculum tepidum (strain ATCC 49652 / DSM 12025 / NBRC 103806 / TLS) (Chlorobium tepidum).